A 1135-amino-acid chain; its full sequence is Envelopment polyprotein (1135 aa).

A signal peptide spans M1 to A35. Over K36–T314 the chain is Lumenal. A Cell attachment site motif is present at residues R41 to D43. Disulfide bonds link C114–C145 and C122–C156. Residue N116 is glycosylated (N-linked (GlcNAc...) asparagine; by host). Residues L177–L195 are non-covalent dimerization. An N-linked (GlcNAc...) asparagine; by host glycan is attached at N210. An intrachain disulfide couples C224 to C285. A helical membrane pass occupies residues A315–C366. Residues L367–S484 are Cytoplasmic-facing. The segment at L437 to S484 is signal for signal peptide peptidase. Residues K485–R1067 are Lumenal-facing. N588, N605, and N980 each carry an N-linked (GlcNAc...) asparagine; by host glycan. The chain crosses the membrane as a helical span at residues V1068–I1088. Residues C1089–V1135 lie on the Cytoplasmic side of the membrane.

This sequence belongs to the tospovirus envelope glycoprotein family. In terms of assembly, homodimer; disulfide-linked. Heterodimer with Glycoprotein C. Interacts with nucleoprotein. As to quaternary structure, heterodimer with Glycoprotein N. Interacts with nucleoprotein. Post-translationally, specific enzymatic cleavages in vivo yield mature proteins including Glycoprotein N and Glycoprotein C. Glycosylated with O-linked glycans. Glycosylation is essential for proper subcellular location. In terms of processing, cleaved at acidic pH.

The protein resides in the virion membrane. Its subcellular location is the host Golgi apparatus membrane. It localises to the host endoplasmic reticulum membrane. Functionally, forms the spikes present at the surface of the virion together with Glycoprotein C. They are able to attach the virion to a cell receptor and to promote fusion of membranes after endocytosis of the virion. Plays a role in virus binding and/or entry into the vector midgut. Forms the spikes present at the surface of the virion together with Glycoprotein N. They are able to attach the virion to a cell receptor and to promote fusion of membranes after endocytosis of the virion. Probable class II fusion protein. The chain is Envelopment polyprotein (GP) from Tomato spotted wilt virus (strain Regular2A) (TSWV).